We begin with the raw amino-acid sequence, 471 residues long: MAMEKDLSPNSPRIRKLRDTSYPTTPTSRMNTNNQRDNHYPNIPNSPRDYNYTPSSPTARIRHRRRSSENLAEVNRSNVSRVSNLLLGDKNKYRSMWIRTCSSLWMLGGVVFIIYMGHLYIWAMVVVIQIFMAKELFFLRRRAHEERRLPGFWLLNWHFFFTAMLFVYGRIIQQQLVNTVSSDRFIYKLVSGLIKYQMVICYFLYIAGLIWFILTLKNKMYKYQFGQYAWTHMILIVVFTQSSFTVANIFEGIFWFLLPAALIAMNDVAAYFFGFYFGKTPLIKLSPKKTWEGFIGASVATIISAFIFANVLGQFQWLTCPRKDLSTGWLHCDPGPLFRPEYYPFPSWITPFSPWKGISTLPVQWHAFSLGLFASIMAPFGGFFASGFKRAFKIKDFGDSIPGHGGFTDRMDCQMVMAVFAYIYIQSFIVNRDYSVEMILDQISRSLGHEEQKMLYEKLGDILQHKLQGRF.

The tract at residues 1 to 72 (MAMEKDLSPN…HRRRSSENLA (72 aa)) is disordered. Residues 21-35 (SYPTTPTSRMNTNNQ) show a composition bias toward polar residues. Transmembrane regions (helical) follow at residues 97–116 (WIRTCSSLWMLGGVVFIIYM), 120–139 (YIWAMVVVIQIFMAKELFFL), 149–169 (LPGFWLLNWHFFFTAMLFVYG), 196–216 (YQMVICYFLYIAGLIWFILTL), 228–250 (YAWTHMILIVVFTQSSFTVANIF), 255–277 (WFLLPAALIAMNDVAAYFFGFYF), 293–313 (GFIGASVATIISAFIFANVLG), and 368–388 (FSLGLFASIMAPFGGFFASGF).

It belongs to the CDS family. The cofactor is Mg(2+).

The protein resides in the membrane. The catalysed reaction is a 1,2-diacyl-sn-glycero-3-phosphate + CTP + H(+) = a CDP-1,2-diacyl-sn-glycerol + diphosphate. It functions in the pathway phospholipid metabolism; CDP-diacylglycerol biosynthesis; CDP-diacylglycerol from sn-glycerol 3-phosphate: step 3/3. Its function is as follows. May be involved in the synthesis of minor phospholipids and in modulation of IP3-mediated signal transduction. In Arabidopsis thaliana (Mouse-ear cress), this protein is Phosphatidate cytidylyltransferase 3.